The chain runs to 255 residues: Imidazole glycerol phosphate synthase subunit HisF (255 aa).

Residues Asp-13 and Asp-132 contribute to the active site.

It belongs to the HisA/HisF family. In terms of assembly, heterodimer of HisH and HisF.

Its subcellular location is the cytoplasm. It carries out the reaction 5-[(5-phospho-1-deoxy-D-ribulos-1-ylimino)methylamino]-1-(5-phospho-beta-D-ribosyl)imidazole-4-carboxamide + L-glutamine = D-erythro-1-(imidazol-4-yl)glycerol 3-phosphate + 5-amino-1-(5-phospho-beta-D-ribosyl)imidazole-4-carboxamide + L-glutamate + H(+). The protein operates within amino-acid biosynthesis; L-histidine biosynthesis; L-histidine from 5-phospho-alpha-D-ribose 1-diphosphate: step 5/9. In terms of biological role, IGPS catalyzes the conversion of PRFAR and glutamine to IGP, AICAR and glutamate. The HisF subunit catalyzes the cyclization activity that produces IGP and AICAR from PRFAR using the ammonia provided by the HisH subunit. This chain is Imidazole glycerol phosphate synthase subunit HisF, found in Leptospira biflexa serovar Patoc (strain Patoc 1 / ATCC 23582 / Paris).